Here is a 395-residue protein sequence, read N- to C-terminus: Gastric triacylglycerol lipase (395 aa).

The N-terminal stretch at 1-18 (MWLLLITSVISTFGGAHG) is a signal peptide. N-linked (GlcNAc...) asparagine glycans are attached at residues asparagine 33, asparagine 68, and asparagine 98. Residues 77-376 (PVVYLQHGLI…LAYNHLDFIW (300 aa)) form the AB hydrolase-1 domain. Residue serine 171 is the Nucleophile of the active site. A disulfide bond links cysteine 245 and cysteine 254. N-linked (GlcNAc...) asparagine glycosylation is present at asparagine 270. Catalysis depends on charge relay system residues aspartate 342 and histidine 371.

Belongs to the AB hydrolase superfamily. Lipase family. As to expression, secreted by the serous (von Ebner's) glands at the back of the rat tongue.

The protein resides in the secreted. The enzyme catalyses a triacylglycerol + H2O = a diacylglycerol + a fatty acid + H(+). The catalysed reaction is 1,2,3-tri-(9Z-octadecenoyl)-glycerol + H2O = 1,2-di-(9Z-octadecenoyl)-sn-glycerol + (9Z)-octadecenoate + H(+). It carries out the reaction 1,2,3-trioctanoylglycerol + H2O = 1,2-dioctanoyl-sn-glycerol + octanoate + H(+). Its function is as follows. Catalyzes the hydrolysis of triacylglycerols to yield free fatty acids, diacylglycerol, monoacylglycerol, and glycerol. Shows a preferential hydrolysis at the sn-3 position of triacylglycerol. The chain is Gastric triacylglycerol lipase (Lipf) from Rattus norvegicus (Rat).